Consider the following 248-residue polypeptide: Probable transcriptional regulatory protein Fphi_1565 (248 aa).

It belongs to the TACO1 family.

Its subcellular location is the cytoplasm. This Francisella philomiragia subsp. philomiragia (strain ATCC 25017 / CCUG 19701 / FSC 153 / O#319-036) protein is Probable transcriptional regulatory protein Fphi_1565.